The following is a 394-amino-acid chain: Putative transporter AraJ (394 aa).

At 1–4 (MKKV) the chain is on the cytoplasmic side. A helical transmembrane segment spans residues 5 to 27 (ILSLALGTFGLGMAEFGIMGVLT). The Periplasmic portion of the chain corresponds to 28 to 41 (ELAHNVGISIPAAG). The chain crosses the membrane as a helical span at residues 42–63 (HMISYYALGVVVGAPIIALFSS). The Cytoplasmic portion of the chain corresponds to 64–69 (RYSLKH). The chain crosses the membrane as a helical span at residues 70-89 (ILLFLVALCVIGNAMFTLSS). Residues 90–93 (SYLM) are Periplasmic-facing. The chain crosses the membrane as a helical span at residues 94 to 116 (LAIGRLVSGFPHGAFFGVGAIVL). Residues 117-128 (SKIIKPGKVTAA) lie on the Cytoplasmic side of the membrane. The chain crosses the membrane as a helical span at residues 129-151 (VAGMVSGMTVANLLGIPLGTYLS). At 152-155 (QEFS) the chain is on the periplasmic side. The helical transmembrane segment at 156-178 (WRYTFLLIAVFNIAVMASVYFWV) threads the bilayer. The Cytoplasmic portion of the chain corresponds to 179–198 (PDIRDEAKGNLREQFHFLRS). Residues 199 to 221 (PAPWLIFAATMFGNAGVFAWFSY) form a helical membrane-spanning segment. Residues 222 to 235 (VKPYMMFISGFSET) are Periplasmic-facing. Residues 236-255 (AMTFIMMLVGLGMVLGNMLS) traverse the membrane as a helical segment. Over 256-261 (GRISGR) the chain is Cytoplasmic. Residues 262–284 (YSPLRIAAVTDFIIVLALLMLFF) form a helical membrane-spanning segment. The Periplasmic portion of the chain corresponds to 285-293 (CGGMKTTSL). Residues 294 to 316 (IFAFICCAGLFALSAPLQILLLQ) form a helical membrane-spanning segment. Over 317–322 (NAKGGE) the chain is Cytoplasmic. Residues 323–342 (LLGAAGGQIAFNLGSAVGAY) form a helical membrane-spanning segment. Over 343-351 (CGGMMLTLG) the chain is Periplasmic. The helical transmembrane segment at 352–374 (LAYNYVALPAALLSFAAMSSLLL) threads the bilayer. Residues 375–394 (YGRYKRQQAADTPVLAKPLG) are Cytoplasmic-facing.

The protein belongs to the major facilitator superfamily.

It localises to the cell inner membrane. Functionally, may be involved in either the transport or processing of arabinose polymers. In Escherichia coli (strain K12), this protein is Putative transporter AraJ (araJ).